The following is a 132-amino-acid chain: Large ribosomal subunit protein uL14 (132 aa).

The protein belongs to the universal ribosomal protein uL14 family. As to quaternary structure, part of the 50S ribosomal subunit. Forms a cluster with proteins L3 and L24e, part of which may contact the 16S rRNA in 2 intersubunit bridges.

In terms of biological role, binds to 23S rRNA. Forms part of two intersubunit bridges in the 70S ribosome. This Methanocaldococcus jannaschii (strain ATCC 43067 / DSM 2661 / JAL-1 / JCM 10045 / NBRC 100440) (Methanococcus jannaschii) protein is Large ribosomal subunit protein uL14.